A 532-amino-acid polypeptide reads, in one-letter code: 2,3-bisphosphoglycerate-independent phosphoglycerate mutase (532 aa).

Mn(2+) is bound by residues Asp15 and Ser65. Ser65 (phosphoserine intermediate) is an active-site residue. Residues His126, 156–157, Arg188, Arg194, 258–261, and Lys331 each bind substrate; these read RD and RPDR. Mn(2+)-binding residues include Asp398, His402, Asp439, His440, and His457.

The protein belongs to the BPG-independent phosphoglycerate mutase family. Monomer. The cofactor is Mn(2+).

The catalysed reaction is (2R)-2-phosphoglycerate = (2R)-3-phosphoglycerate. It participates in carbohydrate degradation; glycolysis; pyruvate from D-glyceraldehyde 3-phosphate: step 3/5. Catalyzes the interconversion of 2-phosphoglycerate and 3-phosphoglycerate. The chain is 2,3-bisphosphoglycerate-independent phosphoglycerate mutase from Synechocystis sp. (strain ATCC 27184 / PCC 6803 / Kazusa).